Reading from the N-terminus, the 208-residue chain is MSTVVVKGNVNGGVQQPRRRRRQSLRRRANRVQPVVMVTASGQPRRRRRRRGGNRRSRRTGVPRGRGSSETFVFTKDNLMGNSQGSFTFGPSLSDCPAFKDGILKAYHEYKITSILLQFVSEASSTSSGSIAYELDPHCKVSSLQSYVNKFQITKGGAKTYQARMINGVEWHDSSEDQCRILWKGNGKSSDTAGSFRVTIRVALQNPK.

Low complexity predominate over residues 1-16 (MSTVVVKGNVNGGVQQ). Residues 1 to 69 (MSTVVVKGNV…TGVPRGRGSS (69 aa)) form a disordered region. Basic residues-rich tracts occupy residues 17-30 (PRRRRRQSLRRRAN) and 44-61 (PRRRRRRRGGNRRSRRTG).

It belongs to the luteoviruses capsid protein family.

The protein resides in the virion. Functionally, major capsid protein that self-assembles to form an icosahedral capsid with a T=3 symmetry, about 23 nm in diameter, and consisting of 180 capsid proteins monomers. Most of the 180 monomers are the major capsid protein, but a small percentage contain the minor capsid protein, which has a long C-terminal extension. This Solanum tuberosum (Potato) protein is Major capsid protein.